A 429-amino-acid polypeptide reads, in one-letter code: Keratin, type I cytoskeletal 47 kDa (429 aa).

The segment covering 1–16 (MTSYRSSSASYYSGSS) has biased composition (low complexity). The interval 1 to 20 (MTSYRSSSASYYSGSSSKGG) is disordered. Residues 1–69 (MTSYRSSSAS…EAASSSFGGN (69 aa)) form a head region. The segment at 70 to 105 (EKHAMQNLNDRLASYLEKVRALEATNSDLEGKIRNW) is coil 1A. Positions 70 to 385 (EKHAMQNLND…RLLEGELGQV (316 aa)) constitute an IF rod domain. A linker 1 region spans residues 106–127 (YDKQSDAGIGAGSKDYSKYFEI). The segment at 128-219 (IAELRNKIRA…KNHEEEMSHA (92 aa)) is coil 1B. The interval 220–242 (KSQSAGKVSVEMDAALGVDLTSI) is linker 12. Positions 243-381 (LNNMRADYEI…QTYRRLLEGE (139 aa)) are coil 2. Positions 382-429 (LGQVTTVANTSSVESKTESSSTSTTRTRMVKTIVEEVVDGKVVSSRVE) are tail. Positions 389–408 (ANTSSVESKTESSSTSTTRT) are disordered. The span at 391–408 (TSSVESKTESSSTSTTRT) shows a compositional bias: low complexity.

It belongs to the intermediate filament family. In terms of assembly, heterotetramer of two type I and two type II keratins.

The polypeptide is Keratin, type I cytoskeletal 47 kDa (xk81a1) (Xenopus laevis (African clawed frog)).